Consider the following 179-residue polypeptide: CDP-archaeol synthase (179 aa).

Transmembrane regions (helical) follow at residues 53–73 (FVGG…IEKL), 88–108 (FTLT…GSFI), 120–140 (FLIV…SLYP), and 145–165 (LFTA…HMGI).

The protein belongs to the CDP-archaeol synthase family. Requires Mg(2+) as cofactor.

The protein localises to the cell membrane. The enzyme catalyses 2,3-bis-O-(geranylgeranyl)-sn-glycerol 1-phosphate + CTP + H(+) = CDP-2,3-bis-O-(geranylgeranyl)-sn-glycerol + diphosphate. Its pathway is membrane lipid metabolism; glycerophospholipid metabolism. In terms of biological role, catalyzes the formation of CDP-2,3-bis-(O-geranylgeranyl)-sn-glycerol (CDP-archaeol) from 2,3-bis-(O-geranylgeranyl)-sn-glycerol 1-phosphate (DGGGP) and CTP. This reaction is the third ether-bond-formation step in the biosynthesis of archaeal membrane lipids. Can use CTP or dCTP, but not ATP, GTP or TTP. In Archaeoglobus fulgidus (strain ATCC 49558 / DSM 4304 / JCM 9628 / NBRC 100126 / VC-16), this protein is CDP-archaeol synthase.